The primary structure comprises 178 residues: Epididymal-specific lipocalin-9 (178 aa).

The N-terminal stretch at 1–16 is a signal peptide; it reads MVLLLVLGLVLSLATA. N-linked (GlcNAc...) asparagine glycans are attached at residues asparagine 46, asparagine 68, and asparagine 129. The cysteines at positions 83 and 176 are disulfide-linked.

It belongs to the calycin superfamily. Lipocalin family. Expressed in epididymis. Not detected in all other tissues tested.

The protein resides in the secreted. This Mus musculus (Mouse) protein is Epididymal-specific lipocalin-9 (Lcn9).